A 217-amino-acid chain; its full sequence is Large ribosomal subunit protein uL3 (217 aa).

This sequence belongs to the universal ribosomal protein uL3 family. As to quaternary structure, part of the 50S ribosomal subunit. Forms a cluster with proteins L14 and L19.

One of the primary rRNA binding proteins, it binds directly near the 3'-end of the 23S rRNA, where it nucleates assembly of the 50S subunit. The polypeptide is Large ribosomal subunit protein uL3 (Mycobacterium marinum (strain ATCC BAA-535 / M)).